Reading from the N-terminus, the 327-residue chain is Tartrate-resistant acid phosphatase type 5 (327 aa).

The first 22 residues, 1 to 22 (MDSWVVLLGLQIIWLPLLTHGT), serve as a signal peptide directing secretion. Fe cation contacts are provided by Asp35, Asp73, Tyr76, and Asn112. Residues Asn118 and Asn149 are each glycosylated (N-linked (GlcNAc...) asparagine). A disulfide bridge connects residues Cys163 and Cys221. Fe cation contacts are provided by His207, His242, and His244.

In terms of assembly, exists either as monomer or, after proteolytic processing, as a dimer of two chains linked by disulfide bond(s). The cofactor is Fe cation. Characteristic constituent of osteoclasts.

The protein resides in the lysosome. It carries out the reaction a phosphate monoester + H2O = an alcohol + phosphate. Functionally, may play a role in the process of bone resorption. The osteoclastic trap acts on nucleotide tri- and diphosphates with higher affinity, compared with other substrates. The chain is Tartrate-resistant acid phosphatase type 5 (Acp5) from Mus musculus (Mouse).